The primary structure comprises 730 residues: Elongation factor 2 (730 aa).

One can recognise a tr-type G domain in the interval 19-229 (LMIRNIGIVA…GVSFSEVFNY (211 aa)). GTP-binding positions include 28–35 (AHIDHGKT), 94–98 (DTPGH), and 148–151 (NKVD). Position 596 is a diphthamide (His596).

The protein belongs to the TRAFAC class translation factor GTPase superfamily. Classic translation factor GTPase family. EF-G/EF-2 subfamily.

Its subcellular location is the cytoplasm. Catalyzes the GTP-dependent ribosomal translocation step during translation elongation. During this step, the ribosome changes from the pre-translocational (PRE) to the post-translocational (POST) state as the newly formed A-site-bound peptidyl-tRNA and P-site-bound deacylated tRNA move to the P and E sites, respectively. Catalyzes the coordinated movement of the two tRNA molecules, the mRNA and conformational changes in the ribosome. This chain is Elongation factor 2 (fusA), found in Methanococcoides burtonii (strain DSM 6242 / NBRC 107633 / OCM 468 / ACE-M).